The chain runs to 233 residues: 2,3-bisphosphoglycerate-dependent phosphoglycerate mutase (233 aa).

Residues 8–15 (RHGQSLWN), 21–22 (TG), R60, 116–119 (ERYY), K127, 143–144 (RR), and 187–188 (GN) each bind substrate. H9 (tele-phosphohistidine intermediate) is an active-site residue. The Proton donor/acceptor role is filled by E116.

It belongs to the phosphoglycerate mutase family. BPG-dependent PGAM subfamily.

It catalyses the reaction (2R)-2-phosphoglycerate = (2R)-3-phosphoglycerate. It participates in carbohydrate degradation; glycolysis; pyruvate from D-glyceraldehyde 3-phosphate: step 3/5. In terms of biological role, catalyzes the interconversion of 2-phosphoglycerate and 3-phosphoglycerate. This is 2,3-bisphosphoglycerate-dependent phosphoglycerate mutase from Gloeothece citriformis (strain PCC 7424) (Cyanothece sp. (strain PCC 7424)).